Consider the following 80-residue polypeptide: Metallothionein-like protein type 2 (80 aa).

This sequence belongs to the metallothionein superfamily. Type 15 family.

In terms of biological role, metallothioneins have a high content of cysteine residues that bind various heavy metals. The protein is Metallothionein-like protein type 2 (MTI) of Ricinus communis (Castor bean).